Consider the following 702-residue polypeptide: Solute carrier organic anion transporter family member 1B3 (702 aa).

Topologically, residues 1-28 (MDQHQHLNKTAESASSEKKKTRRCNGFK) are cytoplasmic. The chain crosses the membrane as a helical span at residues 29–48 (MFLAALSFSYIAKALGGIIM). The Extracellular portion of the chain corresponds to 49–67 (KISITQIERRFDISSSLAG). Residues 68 to 88 (LIDGSFEIGNLLVIVFVSYFG) traverse the membrane as a helical segment. Topologically, residues 89-94 (SKLHRP) are cytoplasmic. Residues 95-119 (KLIGIGCLLMGTGSILTSLPHFFMG) form a helical membrane-spanning segment. Over 120–168 (YYRYSKETHINPSENSTSSLSTCLINQTLSFNGTSPEIVEKDCVKESGS) the chain is Extracellular. 3 N-linked (GlcNAc...) asparagine glycosylation sites follow: N134, N145, and N151. Residues 169–197 (HMWIYVFMGNMLRGIGETPIVPLGISYID) traverse the membrane as a helical segment. Topologically, residues 198-216 (DFAKEGHSSLYLGSLNAIG) are cytoplasmic. The chain crosses the membrane as a helical span at residues 217–237 (MIGPVIGFALGSLFAKMYVDI). At 238 to 255 (GYVDLSTIRITPKDSRWV) the chain is on the extracellular side. Residues 256 to 280 (GAWWLGFLVSGLFSIISSIPFFFLP) traverse the membrane as a helical segment. Over 281–331 (KNPNKPQKERKISLSLHVLKTNDDRNQTANLTNQGKNVTKNVTGFFQSLKS) the chain is Cytoplasmic. Phosphoserine is present on residues S293 and S295. The chain crosses the membrane as a helical span at residues 332-353 (ILTNPLYVIFLLLTLLQVSSFI). At 354–373 (GSFTYVFKYMEQQYGQSASH) the chain is on the extracellular side. The helical transmembrane segment at 374–397 (ANFLLGIITIPTVATGMFLGGFII) threads the bilayer. Over 398–401 (KKFK) the chain is Cytoplasmic. The helical transmembrane segment at 402–425 (LSLVGIAKFSFLTSMISFLFQLLY) threads the bilayer. Residues 426–537 (FPLICESKSV…NTCTRKFFIY (112 aa)) lie on the Extracellular side of the membrane. Residue N445 is glycosylated (N-linked (GlcNAc...) asparagine). In terms of domain architecture, Kazal-like spans 453–508 (DVPLSYCNSECNCDESQWEPVCGNNGITYLSPCLAGCKSSSGIKKHTVFYNCSCVE). 3 disulfide bridges follow: C459/C489, C465/C485, and C474/C506. N-linked (GlcNAc...) asparagine glycans are attached at residues N503 and N516. Residues 538 to 560 (VAIQVINSLFSATGGTTFILLTV) form a helical membrane-spanning segment. Residues 561-569 (KIVQPELKA) are Cytoplasmic-facing. A helical membrane pass occupies residues 570–595 (LAMGFQSMVIRTLGGILAPIYFGALI). Residues 596–629 (DKTCMKWSTNSCGAQGACRIYNSVFFGRVYLGLS) lie on the Extracellular side of the membrane. A helical membrane pass occupies residues 630–647 (IALRFPALVLYIVFIFAM). Residues 648-695 (KKKFQGKDTKASDNERKVMDEANLEFLNNGEHFVPSAGTDSKTCNLDM) lie on the Cytoplasmic side of the membrane. Phosphoserine is present on S683.

The protein belongs to the organo anion transporter (TC 2.A.60) family. N-glycosylated. As to expression, highly expressed in liver, in particular at the basolateral membrane of hepatocytes near the central vein. Expressed in the placenta. In testis, primarily localized to the basal membrane of Sertoli cells and weakly expressed in Leydig cells and within the tubules.

It localises to the basolateral cell membrane. The protein localises to the basal cell membrane. It catalyses the reaction estrone 3-sulfate(out) + hydrogencarbonate(in) = estrone 3-sulfate(in) + hydrogencarbonate(out). It carries out the reaction 17beta-estradiol 17-O-(beta-D-glucuronate)(out) = 17beta-estradiol 17-O-(beta-D-glucuronate)(in). The enzyme catalyses taurocholate(out) = taurocholate(in). The catalysed reaction is estrone 3-sulfate(out) = estrone 3-sulfate(in). It catalyses the reaction dehydroepiandrosterone 3-sulfate(out) = dehydroepiandrosterone 3-sulfate(in). It carries out the reaction leukotriene C4(out) = leukotriene C4(in). The enzyme catalyses L-thyroxine(out) = L-thyroxine(in). The catalysed reaction is prostaglandin E2(out) = prostaglandin E2(in). It catalyses the reaction (4E,15E)-bilirubin IXalpha C8-beta-D-glucuronoside(out) = (4E,15E)-bilirubin IXalpha C8-beta-D-glucuronoside(in). It carries out the reaction bilirubin IXalpha bis-beta-D-glucuronoside(out) = bilirubin IXalpha bis-beta-D-glucuronoside(in). In terms of biological role, mediates the Na(+)-independent uptake of organic anions. Shows broad substrate specificity, can transport both organic anions such as bile acid taurocholate (cholyltaurine) and conjugated steroids (17-beta-glucuronosyl estradiol, dehydroepiandrosterone sulfate (DHEAS), and estrone 3-sulfate), as well as eicosanoid leukotriene C4, prostaglandin E2 and L-thyroxine (T4). Hydrogencarbonate/HCO3(-) acts as the probable counteranion that exchanges for organic anions. Shows a pH-sensitive substrate specificity towards sulfated steroids, taurocholate and T4 which may be ascribed to the protonation state of the binding site and leads to a stimulation of substrate transport in an acidic microenvironment. Involved in the clearance of bile acids and organic anions from the liver. Can take up bilirubin glucuronides from plasma into the liver, contributing to the detoxification-enhancing liver-blood shuttling loop. Transports coproporphyrin I and III, by-products of heme synthesis, and may be involved in their hepatic disposition. May contribute to regulate the transport of organic compounds in testes across the blood-testis-barrier. Can transport HMG-CoA reductase inhibitors (also known as statins) such as pitavastatin, a clinically important class of hypolipidemic drugs. May play an important role in plasma and tissue distribution of the structurally diverse chemotherapeutic drugs methotrexate and paclitaxel. May also transport antihypertension agents, such as the angiotensin-converting enzyme (ACE) inhibitor prodrug enalapril, and the highly selective angiotensin II AT1-receptor antagonist valsartan, in the liver. The sequence is that of Solute carrier organic anion transporter family member 1B3 (SLCO1B3) from Homo sapiens (Human).